Here is a 327-residue protein sequence, read N- to C-terminus: Phenylalanine--tRNA ligase alpha subunit (327 aa).

Residue glutamate 252 coordinates Mg(2+).

The protein belongs to the class-II aminoacyl-tRNA synthetase family. Phe-tRNA synthetase alpha subunit type 1 subfamily. In terms of assembly, tetramer of two alpha and two beta subunits. Mg(2+) serves as cofactor.

The protein resides in the cytoplasm. The enzyme catalyses tRNA(Phe) + L-phenylalanine + ATP = L-phenylalanyl-tRNA(Phe) + AMP + diphosphate + H(+). The sequence is that of Phenylalanine--tRNA ligase alpha subunit from Shewanella sediminis (strain HAW-EB3).